A 188-amino-acid polypeptide reads, in one-letter code: Accessory gene regulator protein B (188 aa).

A run of 4 helical transmembrane segments spans residues 49–69 (LALL…FLTL), 104–126 (ISFQ…YAPA), 143–163 (IKSI…PPPY), and 166–186 (FVVY…SIKE).

This sequence belongs to the AgrB family.

The protein localises to the cell membrane. Functionally, essential for the production of a quorum sensing system signal molecule, the autoinducing peptide (AIP). This quorum sensing system is responsible for the regulation of the expression of virulence factor genes. Involved in the proteolytic processing of AgrD, the precursor of AIP. The polypeptide is Accessory gene regulator protein B (Staphylococcus intermedius).